A 188-amino-acid chain; its full sequence is dCTP deaminase (188 aa).

Residues Lys111–Arg116, Thr135–Glu137, Gln156, Tyr170, and Gln180 contribute to the dCTP site. The active-site Proton donor/acceptor is the Glu137.

Belongs to the dCTP deaminase family. In terms of assembly, homotrimer.

The enzyme catalyses dCTP + H2O + H(+) = dUTP + NH4(+). It participates in pyrimidine metabolism; dUMP biosynthesis; dUMP from dCTP (dUTP route): step 1/2. Functionally, catalyzes the deamination of dCTP to dUTP. This chain is dCTP deaminase, found in Polaromonas sp. (strain JS666 / ATCC BAA-500).